A 231-amino-acid chain; its full sequence is Ion-translocating oxidoreductase complex subunit E (231 aa).

The next 6 helical transmembrane spans lie at 18–38 (ALVQ…ATNA), 39–59 (LGLG…ISTL), 63–83 (TPAE…VSAV), 86–106 (LINA…PLIV), 125–145 (ALSA…MFVL), and 182–202 (PFLL…MLAG).

This sequence belongs to the NqrDE/RnfAE family. As to quaternary structure, the complex is composed of six subunits: RsxA, RsxB, RsxC, RsxD, RsxE and RsxG.

Its subcellular location is the cell inner membrane. In terms of biological role, part of a membrane-bound complex that couples electron transfer with translocation of ions across the membrane. Required to maintain the reduced state of SoxR. This chain is Ion-translocating oxidoreductase complex subunit E, found in Escherichia coli O6:H1 (strain CFT073 / ATCC 700928 / UPEC).